A 189-amino-acid polypeptide reads, in one-letter code: Thermostable direct hemolysin-related (189 aa).

Positions 1–24 (MKYRYFAKKSFLFISMLAAFKTFA) are cleaved as a signal peptide. The cysteines at positions 175 and 185 are disulfide-linked.

Belongs to the TDH hemolysin family. Homodimer.

Bacterial hemolysins are exotoxins that attack blood cell membranes and cause cell rupture by mechanisms not clearly defined. This is Thermostable direct hemolysin-related (tdh3) from Vibrio parahaemolyticus.